The primary structure comprises 152 residues: Sorting nexin-3 (152 aa).

The 118-residue stretch at 30 to 147 folds into the PX domain; it reads NFLEIEVRSP…CAFIQDPQWD (118 aa). A 1,2-diacyl-sn-glycero-3-phospho-(1D-myo-inositol-3-phosphate)-binding residues include Arg-73, Ser-75, Lys-99, Arg-104, and Arg-113.

It belongs to the sorting nexin family.

It localises to the cytoplasm. Its subcellular location is the golgi apparatus membrane. The protein resides in the prevacuolar compartment membrane. Its function is as follows. Required for retention of late Golgi membrane proteins. Component of the retrieval machinery that functions by direct interaction with the cytosolic tails of certain TGN membrane proteins during the sorting/budding process at the prevacuolar compartment. Binds phosphatidylinositol 3-phosphate (PtdIns(P3)). The sequence is that of Sorting nexin-3 (SNX3) from Yarrowia lipolytica (strain CLIB 122 / E 150) (Yeast).